Here is a 239-residue protein sequence, read N- to C-terminus: Putative GEM-like protein 3 (239 aa).

The segment at 29 to 68 (HWNPELVSESPAPDEKALSSSSAARSNPYVARAPTETSDA) is disordered. In terms of domain architecture, GRAM spans 128-191 (KIFRQTFETV…HQLKSVNPSI (64 aa)).

Belongs to the GEM family.

This chain is Putative GEM-like protein 3, found in Arabidopsis thaliana (Mouse-ear cress).